The sequence spans 962 residues: Leucine--tRNA ligase (962 aa).

The short motif at 41–51 is the 'HIGH' region element; the sequence is PYLNGNLHAGH. The short motif at 631–635 is the 'KMSKS' region element; the sequence is KMSKS. Lysine 634 contacts ATP.

Belongs to the class-I aminoacyl-tRNA synthetase family.

The protein resides in the cytoplasm. It carries out the reaction tRNA(Leu) + L-leucine + ATP = L-leucyl-tRNA(Leu) + AMP + diphosphate. This is Leucine--tRNA ligase from Methanococcoides burtonii (strain DSM 6242 / NBRC 107633 / OCM 468 / ACE-M).